A 564-amino-acid chain; its full sequence is Glutamyl-tRNA(Gln) amidotransferase subunit B, mitochondrial (564 aa).

A mitochondrion-targeting transit peptide spans 1–88 (MIRQCVSHRG…DTDAKLFSRA (88 aa)). Residues 26 to 63 (PFHHPSPRPLGRKNWSTSDEAKSKRAAMRKGGAPPPEH) are disordered.

It belongs to the GatB/GatE family. GatB subfamily. Subunit of the heterotrimeric GatCAB amidotransferase (AdT) complex, composed of A, B and C subunits.

The protein resides in the mitochondrion. The enzyme catalyses L-glutamyl-tRNA(Gln) + L-glutamine + ATP + H2O = L-glutaminyl-tRNA(Gln) + L-glutamate + ADP + phosphate + H(+). Its function is as follows. Allows the formation of correctly charged Gln-tRNA(Gln) through the transamidation of misacylated Glu-tRNA(Gln) in the mitochondria. The reaction takes place in the presence of glutamine and ATP through an activated gamma-phospho-Glu-tRNA(Gln). In Ajellomyces capsulatus (strain G186AR / H82 / ATCC MYA-2454 / RMSCC 2432) (Darling's disease fungus), this protein is Glutamyl-tRNA(Gln) amidotransferase subunit B, mitochondrial.